The sequence spans 157 residues: Small ribosomal subunit protein uS7 (157 aa).

It belongs to the universal ribosomal protein uS7 family. In terms of assembly, part of the 30S ribosomal subunit. Contacts proteins S9 and S11.

Functionally, one of the primary rRNA binding proteins, it binds directly to 16S rRNA where it nucleates assembly of the head domain of the 30S subunit. Is located at the subunit interface close to the decoding center, probably blocks exit of the E-site tRNA. The protein is Small ribosomal subunit protein uS7 of Borrelia garinii subsp. bavariensis (strain ATCC BAA-2496 / DSM 23469 / PBi) (Borreliella bavariensis).